A 286-amino-acid polypeptide reads, in one-letter code: Shikimate dehydrogenase (NADP(+)) (286 aa).

Shikimate contacts are provided by residues 22–24 and threonine 71; that span reads SRS. Lysine 75 serves as the catalytic Proton acceptor. An NADP(+)-binding site is contributed by glutamate 87. Residues asparagine 96 and aspartate 111 each coordinate shikimate. Residues 136 to 140, 160 to 165, and isoleucine 225 contribute to the NADP(+) site; these read GAGGA and NRTPER. Tyrosine 227 is a shikimate binding site. Residue glycine 248 coordinates NADP(+).

Belongs to the shikimate dehydrogenase family. In terms of assembly, homodimer.

The catalysed reaction is shikimate + NADP(+) = 3-dehydroshikimate + NADPH + H(+). It functions in the pathway metabolic intermediate biosynthesis; chorismate biosynthesis; chorismate from D-erythrose 4-phosphate and phosphoenolpyruvate: step 4/7. In terms of biological role, involved in the biosynthesis of the chorismate, which leads to the biosynthesis of aromatic amino acids. Catalyzes the reversible NADPH linked reduction of 3-dehydroshikimate (DHSA) to yield shikimate (SA). This Rhizobium meliloti (strain 1021) (Ensifer meliloti) protein is Shikimate dehydrogenase (NADP(+)).